A 196-amino-acid polypeptide reads, in one-letter code: Sesquiterpene phosphatase astK (196 aa).

It belongs to the HAD-like hydrolase superfamily.

It carries out the reaction (S,S)-drim-8-en-11-yl phosphate + H2O = (S,S)-drim-8-en-11-ol + phosphate. It functions in the pathway secondary metabolite biosynthesis; terpenoid biosynthesis. Functionally, sesquiterpene phosphatase; part of the gene cluster that mediates the biosynthesis of astellolides, drimane-type sesquiterpene esters that show antimicrobial, anti-inflammatory, and anti-tumor activities. The first step in astellolide biosynthesis is performed by the sesquiterpene cyclase astC that catalyzes the formation of drimanyl pyrophosphate from farnesyl pyrophosphate. Drimanyl pyrophosphate is then dephosphorylated by the sesquiterpene phosphatase astI to produce drimanyl monophosphate which is further dephosphorylated to drim-8-ene-11-ol by atsK. Drim-8-ene-11-ol is converted to confertifolin, probably by the cytochrome P450 monooxygenase astD and/or the dehydrogenase astE. The cytochrome P450 monooxygenases astB, astF and astJ then hydroxylate confertifolin at C6, C14, or C15 to form trihydroxy confertifolin. The nonribosomal peptide synthetase astA catalyzes ester bond formation between trihydroxy contifolin and benzoic acid (BA) or 4-hydroxy benzoic acid (4HBA), leading to the formation of dideacetyl astellolides A and B, respectively. Finally, the O-acetyltransferase astG converts dideacetyl astellolides A and B into deacetyl astellolides A and B. The polypeptide is Sesquiterpene phosphatase astK (Aspergillus oryzae (strain ATCC 42149 / RIB 40) (Yellow koji mold)).